The chain runs to 160 residues: Phosphopantetheine adenylyltransferase (160 aa).

Residue threonine 9 coordinates substrate. Residues 9-10 (TF) and histidine 17 each bind ATP. Substrate is bound by residues lysine 41, leucine 73, and arginine 87. Residues 88-90 (GLR), glutamate 98, and 123-129 (YSFISST) each bind ATP.

This sequence belongs to the bacterial CoaD family. As to quaternary structure, homohexamer. Mg(2+) serves as cofactor.

The protein resides in the cytoplasm. The catalysed reaction is (R)-4'-phosphopantetheine + ATP + H(+) = 3'-dephospho-CoA + diphosphate. It participates in cofactor biosynthesis; coenzyme A biosynthesis; CoA from (R)-pantothenate: step 4/5. In terms of biological role, reversibly transfers an adenylyl group from ATP to 4'-phosphopantetheine, yielding dephospho-CoA (dPCoA) and pyrophosphate. This chain is Phosphopantetheine adenylyltransferase, found in Ectopseudomonas mendocina (strain ymp) (Pseudomonas mendocina).